The following is a 244-amino-acid chain: 23S rRNA (guanosine-2'-O-)-methyltransferase RlmB (244 aa).

S-adenosyl-L-methionine contacts are provided by Gly196, Ile216, and Leu225.

Belongs to the class IV-like SAM-binding methyltransferase superfamily. RNA methyltransferase TrmH family. RlmB subfamily. As to quaternary structure, homodimer.

The protein localises to the cytoplasm. It catalyses the reaction guanosine(2251) in 23S rRNA + S-adenosyl-L-methionine = 2'-O-methylguanosine(2251) in 23S rRNA + S-adenosyl-L-homocysteine + H(+). Functionally, specifically methylates the ribose of guanosine 2251 in 23S rRNA. The protein is 23S rRNA (guanosine-2'-O-)-methyltransferase RlmB of Pectobacterium atrosepticum (strain SCRI 1043 / ATCC BAA-672) (Erwinia carotovora subsp. atroseptica).